Reading from the N-terminus, the 155-residue chain is Large ribosomal subunit protein eL24 (155 aa).

The segment at 87-155 is disordered; it reads LELIKERRSQ…SFQKVKATSR (69 aa). Basic and acidic residues predominate over residues 89 to 129; that stretch reads LIKERRSQKPSDRKAARDSKLAKDKEAKKAAKAARKAEKAK. Low complexity predominate over residues 130-143; it reads AVASGASVVSKQQA.

Belongs to the eukaryotic ribosomal protein eL24 family. Component of the large ribosomal subunit. Mature ribosomes consist of a small (40S) and a large (60S) subunit. The 40S subunit contains about 32 different proteins and 1 molecule of RNA (18S). The 60S subunit contains 45 different proteins and 3 molecules of RNA (25S, 5.8S and 5S).

The protein localises to the cytoplasm. Functionally, component of the ribosome, a large ribonucleoprotein complex responsible for the synthesis of proteins in the cell. The small ribosomal subunit (SSU) binds messenger RNAs (mRNAs) and translates the encoded message by selecting cognate aminoacyl-transfer RNA (tRNA) molecules. The large subunit (LSU) contains the ribosomal catalytic site termed the peptidyl transferase center (PTC), which catalyzes the formation of peptide bonds, thereby polymerizing the amino acids delivered by tRNAs into a polypeptide chain. The nascent polypeptides leave the ribosome through a tunnel in the LSU and interact with protein factors that function in enzymatic processing, targeting, and the membrane insertion of nascent chains at the exit of the ribosomal tunnel. This Candida albicans (strain SC5314 / ATCC MYA-2876) (Yeast) protein is Large ribosomal subunit protein eL24.